A 260-amino-acid chain; its full sequence is Thrombin-like enzyme flavoxobin (260 aa).

The signal sequence occupies residues 1–18 (MVLIRVLANLLILQLSYA). Residues 19-24 (QKSSEL) constitute a propeptide that is removed on maturation. Residues 25-251 (VIGGDECNIN…YNAWIQSIIA (227 aa)) form the Peptidase S1 domain. Intrachain disulfides connect Cys-31–Cys-165, Cys-52–Cys-68, Cys-100–Cys-258, Cys-144–Cys-212, Cys-176–Cys-191, and Cys-202–Cys-227. Catalysis depends on charge relay system residues His-67 and Asp-112. The active-site Charge relay system is Ser-206.

It belongs to the peptidase S1 family. Snake venom subfamily. In terms of assembly, monomer. Expressed by the venom gland.

It localises to the secreted. It carries out the reaction Selective cleavage of Arg-|-Xaa bond in fibrinogen, to form fibrin, and release fibrinopeptide A. The specificity of further degradation of fibrinogen varies with species origin of the enzyme.. Its activity is regulated as follows. Inhibited by alpha(2)-macroglobulin, diisopropylfluorophosphate (DFP) and PMSF. Low inhibition by tosyl-L-lysine chloromethyl ketone. Its function is as follows. Thrombin-like snake venom serine protease that clots fibrinogen (FGA) by releasing fibrinopeptide A. According to PubMed:8585090, only cleaves rabbit fibrinogen, whereas no specificity is described in PubMed:3910643 (tests done on bovine fibrinogen). Also acts as a C3 convertase that independently cleaves human C3 and kick-starts the complement cascade. Also increases urokinase-type plasminogen activator (PLAU) and plasminogen activator inhibitor (SERPINE1) in cultured bovine pulmonary artery endothelial cells. Dose-dependently inhibits collagen-induced platelet aggregation. This chain is Thrombin-like enzyme flavoxobin (TLF1), found in Protobothrops flavoviridis (Habu).